Reading from the N-terminus, the 415-residue chain is MSTGTVTIDRLGAQGDGVARTEAGPVFAPFTLPGETVSLAVNKANGTLISLKEASPERVEPPCRHFGPDGVNGTCGGCTLQHASDALYHAFKRNLVIDALRSKGLTPEVGALIIARPGDRRRAAFTARRTEKELLLGYNQMQSHHIVSIGECPITSPGIVSRLATIRKIAAAMASSAEPFRITVLETDTGLDLAFEGLKLSDPQRRSAVDAVLGERGIARVSLNGEIVVEPLKPAIDFDGVTVSPPPGAFTQATRPAEDAMAKLVLAHVGKAKRVADLFAGIGTFALRIARTARVHAVEGDDRAVKALDFAARNTQGLKPVTAEKRDLFRRPMMAQELKAFDAVVFDPPRAGAETQCHELARSGVKKIAAVSCNPVTLARDLSILTAAGYRITGVTPIDQFLWSAHVETVATLEK.

Positions 1–55 (MSTGTVTIDRLGAQGDGVARTEAGPVFAPFTLPGETVSLAVNKANGTLISLKEAS) constitute a TRAM domain. Cysteine 63, cysteine 75, cysteine 78, and cysteine 152 together coordinate [4Fe-4S] cluster. The S-adenosyl-L-methionine site is built by glutamine 252, phenylalanine 279, glutamate 299, and aspartate 347. The Nucleophile role is filled by cysteine 373.

The protein belongs to the class I-like SAM-binding methyltransferase superfamily. RNA M5U methyltransferase family.

This is an uncharacterized protein from Rhizobium meliloti (strain 1021) (Ensifer meliloti).